The primary structure comprises 143 residues: Large ribosomal subunit protein uL13 (143 aa).

The protein belongs to the universal ribosomal protein uL13 family. As to quaternary structure, part of the 50S ribosomal subunit.

Functionally, this protein is one of the early assembly proteins of the 50S ribosomal subunit, although it is not seen to bind rRNA by itself. It is important during the early stages of 50S assembly. The sequence is that of Large ribosomal subunit protein uL13 from Methylacidiphilum infernorum (isolate V4) (Methylokorus infernorum (strain V4)).